Reading from the N-terminus, the 349-residue chain is Thioredoxin reductase, mitochondrial (349 aa).

A mitochondrion-targeting transit peptide spans Met1–Arg30. FAD contacts are provided by residues Ser41 to Ala44, Ile70 to Ala71, Gln75, Asn84, Val117, Cys175, Asp318, and Arg325 to Ala327. A disulfide bridge links Cys172 with Cys175.

Belongs to the class-II pyridine nucleotide-disulfide oxidoreductase family. Homodimer. The cofactor is FAD.

The protein localises to the mitochondrion. The catalysed reaction is [thioredoxin]-dithiol + NADP(+) = [thioredoxin]-disulfide + NADPH + H(+). The protein is Thioredoxin reductase, mitochondrial (TRR1) of Kluyveromyces lactis (strain ATCC 8585 / CBS 2359 / DSM 70799 / NBRC 1267 / NRRL Y-1140 / WM37) (Yeast).